The sequence spans 54 residues: U-myrmicitoxin(01)-Tb5a (54 aa).

An N-terminal signal peptide occupies residues 1–26 (MQLSHLLLAFAMIFVMTIMYAPQVQA). The propeptide occupies 27 to 38 (DAWADANADADV).

Belongs to the formicidae venom precursor-01 superfamily. Contains 1 disulfide bond. Expressed by the venom gland.

The protein resides in the secreted. The polypeptide is U-myrmicitoxin(01)-Tb5a (Tetramorium bicarinatum (Tramp ant)).